A 340-amino-acid chain; its full sequence is PRKC apoptosis WT1 regulator protein (340 aa).

Residues 1–18 show a composition bias toward polar residues; it reads MATGGYRTSSGLGGSTTD. Residues 1–253 are disordered; the sequence is MATGGYRTSS…TDRSGFPRYN (253 aa). Residues 47–82 are compositionally biased toward low complexity; the sequence is SDAAGKPPAGALGTPAAAAANELNNNLPGGAPAAPA. Positions 68-72 match the B30.2/SPRY domain-binding motif motif; the sequence is ELNNN. Phosphoserine is present on S108. The Nuclear localization signal signature appears at 145–161; the sequence is RKGKGQIEKRKLREKRR. Positions 145–203 are selective for apoptosis induction in cancer cells (SAC); it reads RKGKGQIEKRKLREKRRSTGVVNIPAAECLDEYEDDEAGQKERKREDAITQQNTIQNEA. Position 163 is a phosphothreonine; by PKA (T163). Over residues 182-192 the composition is skewed to basic and acidic residues; that stretch reads AGQKERKREDA. A coiled-coil region spans residues 186–206; it reads ERKREDAITQQNTIQNEAVNL. A compositionally biased stretch (polar residues) spans 193–203; it reads ITQQNTIQNEA. Residue S231 is modified to Phosphoserine. A compositionally biased stretch (basic and acidic residues) spans 242-253; that stretch reads SRTDRSGFPRYN. The leucine-zipper stretch occupies residues 300 to 340; the sequence is IGKLKEEIDLLNRDLDDIEDENEQLKQENKTLLKVVGQLTR.

In terms of assembly, homooligomer. Interacts (via the C-terminal region) with WT1. Interacts with THAP1. Interacts with AATF. Interacts with BACE1. Interacts with SPSB1 (via B30.2/SPRY domain); this interaction is direct and occurs in association with the Elongin BC complex. Interacts with SPSB2 (via B30.2/SPRY domain); this interaction occurs in association with the Elongin BC complex. Interacts with SPSB4 (via B30.2/SPRY domain); this interaction occurs in association with the Elongin BC complex. Component of a ternary complex composed of SQSTM1 and PRKCZ. Interacts with actin. In terms of processing, preferentially phosphorylated at the Thr-163 by PKC in cancer cells. Widely expressed. Expression is elevated in various neurodegenerative diseases such as amyotrophic lateral sclerosis, Alzheimer, Parkinson and Huntington diseases and stroke. Down-regulated in several cancers.

It is found in the cytoplasm. The protein localises to the nucleus. In terms of biological role, pro-apoptotic protein capable of selectively inducing apoptosis in cancer cells, sensitizing the cells to diverse apoptotic stimuli and causing regression of tumors in animal models. Induces apoptosis in certain cancer cells by activation of the Fas prodeath pathway and coparallel inhibition of NF-kappa-B transcriptional activity. Inhibits the transcriptional activation and augments the transcriptional repression mediated by WT1. Down-regulates the anti-apoptotic protein BCL2 via its interaction with WT1. Also seems to be a transcriptional repressor by itself. May be directly involved in regulating the amyloid precursor protein (APP) cleavage activity of BACE1. The protein is PRKC apoptosis WT1 regulator protein (PAWR) of Homo sapiens (Human).